Here is a 1128-residue protein sequence, read N- to C-terminus: Mastermind-like protein 2 (1128 aa).

Disordered stretches follow at residues 1–22 and 81–167; these read MGDT…GAGL and QHGQ…GDQR. Residues 12–22 show a composition bias toward gly residues; that stretch reads GGLGGAPGAGL. Over residues 113–122 the composition is skewed to low complexity; the sequence is PTASQTAAPA. Phosphoserine is present on serine 177. Disordered stretches follow at residues 343-509, 521-649, 677-714, 758-794, and 1039-1073; these read FNID…GSNQ, SPSA…SNQP, QVSQ…GYMN, QDQI…GSST, and GTGL…QGTD. Polar residues-rich tracts occupy residues 347–357 and 374–387; these read LGQQSQRSTPR and GLTQ…QLRP. The segment covering 395–426 has biased composition (low complexity); sequence SMASSGLSASSPIPSVPQSQAQPPPATGAARA. Residues 431 to 446 are compositionally biased toward polar residues; the sequence is QEVSHAQQLKQIAANR. Low complexity-rich tracts occupy residues 453–473 and 484–497; these read HQQQ…SAGP and PSPS…SPQS. Residues 566-584 are compositionally biased toward polar residues; the sequence is NSDQANQQMPSVLPSQSKP. The span at 590–649 shows a compositional bias: low complexity; sequence TQQQPQQSSITVQPQQQQQQPQQQQQPQQQQQPQPQQQQQQQPQAQQPAAQPTQPLSNQP. Composition is skewed to polar residues over residues 677 to 695, 778 to 794, and 1039 to 1052; these read QVSQ…QNAG, NVGN…GSST, and GTGL…SQPP.

The protein belongs to the mastermind family. In terms of assembly, interacts through its N-terminal region with the ankyrin repeat region of the Notch proteins NOTCH1, NOTCH2, NOTCH3 and NOTCH4. Forms a DNA-binding complex with Notch proteins and RBPSUH/RBP-J kappa.

It localises to the nucleus speckle. Its function is as follows. Acts as a transcriptional coactivator for NOTCH proteins. Has been shown to amplify NOTCH-induced transcription of HES1. Potentiates activation by NOTCH3 and NOTCH4 more efficiently than MAML1 or MAML3. The protein is Mastermind-like protein 2 (MAML2) of Bos taurus (Bovine).